The chain runs to 382 residues: MRYLTAGESHGPKLVGILEGVPSGAKIDKETIDQALQERQKGPGRGGRMKIEKDQITILSGVRGGLTTGAPIALEIINRDWANWEKIMAWGDEADLESRKVMTPRPGHADLTGYLKYRTEVRNVLERASARETAMRVAIGNIAVQILEALGVEIRGQVLSVGKVHMDSEDTPEYWQRVQASEWKVGDPKGEEALDAQLQEARSQGESLGGVLQIQVRNLLPGLGSYVQWDRKLDGRLAQAVLSVQAIKGVAFGMGFTAGQHFGSEVHDPIGYDSGRGYYRYSNNAGGIEGGMTNGEPVIIEAVMKPIPTLYSPLSTVNLETKEVMEASVERSDVCAVPAALVVLKHVAAWEILQAILEKFPADTWDELDKAWQDYKRFVSEQ.

NADP(+) contacts are provided by Arg39 and Arg45. Residues 127–129 (RAS), 245–246 (QA), Gly290, 305–309 (KPIPT), and Arg331 each bind FMN.

Belongs to the chorismate synthase family. As to quaternary structure, homotetramer. FMNH2 serves as cofactor.

The enzyme catalyses 5-O-(1-carboxyvinyl)-3-phosphoshikimate = chorismate + phosphate. It participates in metabolic intermediate biosynthesis; chorismate biosynthesis; chorismate from D-erythrose 4-phosphate and phosphoenolpyruvate: step 7/7. Its function is as follows. Catalyzes the anti-1,4-elimination of the C-3 phosphate and the C-6 proR hydrogen from 5-enolpyruvylshikimate-3-phosphate (EPSP) to yield chorismate, which is the branch point compound that serves as the starting substrate for the three terminal pathways of aromatic amino acid biosynthesis. This reaction introduces a second double bond into the aromatic ring system. In Desulfitobacterium hafniense (strain DSM 10664 / DCB-2), this protein is Chorismate synthase.